Consider the following 557-residue polypeptide: Potassium-transporting ATPase potassium-binding subunit (557 aa).

Helical transmembrane passes span 5–25 (GFLL…PLGS), 63–83 (LCAI…MLLG), 132–152 (GLTV…FALI), 170–190 (LLRI…LFFI), 253–273 (FVQM…FGEV), 283–303 (LLWA…WAEV), 329–349 (VLVS…AVIA), 356–376 (ALGG…FGGV), 379–399 (GLYG…LMIG), 416–436 (LTAL…ALAM), 484–504 (LLAF…MAIA), and 526–546 (LFVG…FIPA).

The protein belongs to the KdpA family. In terms of assembly, the system is composed of three essential subunits: KdpA, KdpB and KdpC.

Its subcellular location is the cell inner membrane. Part of the high-affinity ATP-driven potassium transport (or Kdp) system, which catalyzes the hydrolysis of ATP coupled with the electrogenic transport of potassium into the cytoplasm. This subunit binds the periplasmic potassium ions and delivers the ions to the membrane domain of KdpB through an intramembrane tunnel. The polypeptide is Potassium-transporting ATPase potassium-binding subunit (Escherichia coli (strain SE11)).